A 76-amino-acid chain; its full sequence is LSILAFVDMVARPSMGLAANTKWIRPRIQYFFAASVVANGVCHLLAPLSTSYIGFCVYAGVFGFAFGWLSSVLFET.

3 helical membrane-spanning segments follow: residues Leu-1–Ala-18, Ile-28–Leu-48, and Ile-53–Leu-73. A H(+)-binding site is contributed by Asp-8. Arg-12 contacts (S)-lactate.

This sequence belongs to the major facilitator superfamily. Monocarboxylate porter (TC 2.A.1.13) family. In terms of assembly, interacts with BSG; interaction mediates SLC16A1 targeting to the plasma membrane. Interacts with EMB; interaction mediates SLC16A1 targeting to the plasma membrane.

Its subcellular location is the cell membrane. The protein localises to the basolateral cell membrane. It is found in the apical cell membrane. It carries out the reaction (S)-lactate(in) + H(+)(in) = (S)-lactate(out) + H(+)(out). The catalysed reaction is acetate(out) + H(+)(out) = acetate(in) + H(+)(in). It catalyses the reaction acetoacetate(out) + H(+)(out) = acetoacetate(in) + H(+)(in). The enzyme catalyses pyruvate(out) + H(+)(out) = pyruvate(in) + H(+)(in). It carries out the reaction (R)-3-hydroxybutanoate(out) + H(+)(out) = (R)-3-hydroxybutanoate(in) + H(+)(in). The catalysed reaction is 3-methyl-2-oxobutanoate(out) + H(+)(out) = 3-methyl-2-oxobutanoate(in) + H(+)(in). It catalyses the reaction 4-methyl-2-oxopentanoate(out) + H(+)(out) = 4-methyl-2-oxopentanoate(in) + H(+)(in). The enzyme catalyses succinate(in) + 2 H(+)(in) = succinate(out) + 2 H(+)(out). In terms of biological role, bidirectional proton-coupled monocarboxylate transporter. Catalyzes the rapid transport across the plasma membrane of many monocarboxylates such as lactate, pyruvate, acetate and the ketone bodies acetoacetate and beta-hydroxybutyrate, and thus contributes to the maintenance of intracellular pH. The transport direction is determined by the proton motive force and the concentration gradient of the substrate monocarboxylate. MCT1 is a major lactate exporter. Plays a role in cellular responses to a high-fat diet by modulating the cellular levels of lactate and pyruvate that contribute to the regulation of central metabolic pathways and insulin secretion, with concomitant effects on plasma insulin levels and blood glucose homeostasis. Facilitates the protonated monocarboxylate form of succinate export, that its transient protonation upon muscle cell acidification in exercising muscle and ischemic heart. Functions via alternate outward- and inward-open conformation states. Protonation and deprotonation is essential for the conformational transition. This is Monocarboxylate transporter 1 (SLC16A1) from Meriones unguiculatus (Mongolian jird).